Consider the following 223-residue polypeptide: Urease accessory protein UreF (223 aa).

Belongs to the UreF family. As to quaternary structure, ureD, UreF and UreG form a complex that acts as a GTP-hydrolysis-dependent molecular chaperone, activating the urease apoprotein by helping to assemble the nickel containing metallocenter of UreC. The UreE protein probably delivers the nickel.

The protein localises to the cytoplasm. Its function is as follows. Required for maturation of urease via the functional incorporation of the urease nickel metallocenter. The sequence is that of Urease accessory protein UreF from Rhizobium johnstonii (strain DSM 114642 / LMG 32736 / 3841) (Rhizobium leguminosarum bv. viciae).